A 415-amino-acid chain; its full sequence is Multidrug resistance protein MdtA (415 aa).

A signal peptide spans 1-21; it reads MKGSYKSRWVIVIVVVIAAIA. Disordered stretches follow at residues 32–60 and 392–415; these read SRSA…GPLA and EAQS…GARS. The span at 399–415 shows a compositional bias: basic and acidic residues; that stretch reads PEEKATSREYAKKGARS.

The protein belongs to the membrane fusion protein (MFP) (TC 8.A.1) family. In terms of assembly, part of a tripartite efflux system composed of MdtA, MdtB and MdtC.

The protein resides in the cell inner membrane. Its function is as follows. The MdtABC tripartite complex confers resistance against novobiocin and deoxycholate. This chain is Multidrug resistance protein MdtA, found in Escherichia coli (strain K12 / MC4100 / BW2952).